The following is a 421-amino-acid chain: Adenylosuccinate synthetase (421 aa).

Residues 11–17 (GDEGKGK) and 39–41 (GHT) contribute to the GTP site. Asp-12 functions as the Proton acceptor in the catalytic mechanism. Residues Asp-12 and Gly-39 each coordinate Mg(2+). IMP contacts are provided by residues 12 to 15 (DEGK), 37 to 40 (NAGH), Thr-124, Arg-138, Gln-220, Thr-235, and Arg-299. His-40 serves as the catalytic Proton donor. 295 to 301 (TTTGRPR) serves as a coordination point for substrate. GTP contacts are provided by residues Arg-301, 327–329 (KLD), and 409–411 (SVG).

It belongs to the adenylosuccinate synthetase family. As to quaternary structure, homodimer. Mg(2+) is required as a cofactor.

It localises to the cytoplasm. The catalysed reaction is IMP + L-aspartate + GTP = N(6)-(1,2-dicarboxyethyl)-AMP + GDP + phosphate + 2 H(+). The protein operates within purine metabolism; AMP biosynthesis via de novo pathway; AMP from IMP: step 1/2. Functionally, plays an important role in the de novo pathway of purine nucleotide biosynthesis. Catalyzes the first committed step in the biosynthesis of AMP from IMP. This is Adenylosuccinate synthetase from Methanothrix thermoacetophila (strain DSM 6194 / JCM 14653 / NBRC 101360 / PT) (Methanosaeta thermophila).